The chain runs to 153 residues: SsrA-binding protein (153 aa).

Belongs to the SmpB family.

Its subcellular location is the cytoplasm. Its function is as follows. Required for rescue of stalled ribosomes mediated by trans-translation. Binds to transfer-messenger RNA (tmRNA), required for stable association of tmRNA with ribosomes. tmRNA and SmpB together mimic tRNA shape, replacing the anticodon stem-loop with SmpB. tmRNA is encoded by the ssrA gene; the 2 termini fold to resemble tRNA(Ala) and it encodes a 'tag peptide', a short internal open reading frame. During trans-translation Ala-aminoacylated tmRNA acts like a tRNA, entering the A-site of stalled ribosomes, displacing the stalled mRNA. The ribosome then switches to translate the ORF on the tmRNA; the nascent peptide is terminated with the 'tag peptide' encoded by the tmRNA and targeted for degradation. The ribosome is freed to recommence translation, which seems to be the essential function of trans-translation. In Orientia tsutsugamushi (strain Boryong) (Rickettsia tsutsugamushi), this protein is SsrA-binding protein.